A 315-amino-acid chain; its full sequence is Probable serine acetyltransferase 4 (315 aa).

Positions 287 to 315 (AKPIIGKKAAPQRRPEELPGVTMEQRWSD) are disordered.

The protein belongs to the transferase hexapeptide repeat family. Homomultimer.

It carries out the reaction L-serine + acetyl-CoA = O-acetyl-L-serine + CoA. Its pathway is amino-acid biosynthesis; L-cysteine biosynthesis; L-cysteine from L-serine: step 1/2. The sequence is that of Probable serine acetyltransferase 4 (SAT4) from Oryza sativa subsp. japonica (Rice).